Reading from the N-terminus, the 257-residue chain is Transcription factor GHD7 (257 aa).

S68 carries the post-translational modification Phosphoserine; by CK1. Residues 190-232 (REAKLMRYKEKRKKRCYEKQIRYASRKAYAEMRPRVRGRFAKE) form the CCT domain. The Nuclear localization signal signature appears at 198 to 204 (KEKRKKR). Residues 226–245 (RGRFAKEPDQEAVAPPSTYV) form a disordered region.

Interacts with HD16/EL1. In terms of processing, phosphorylated at Ser-68 by HD16/EL1, a casein kinase 1. In terms of tissue distribution, expressed in the apical meristem, developing leaves, leaf sheaths of young seedling, root meristem, epidermal layer of developing stems and branch-primordia of developing panicles.

Its subcellular location is the nucleus. Its function is as follows. Probable transcription factor involved in the regulation of flowering time under long day (LD) conditions. Plays a major role as repressor of flowering. Controls flowering time by negatively regulating the expression of EHD1 and HD3A. This chain is Transcription factor GHD7, found in Oryza sativa subsp. japonica (Rice).